We begin with the raw amino-acid sequence, 430 residues long: Tol-Pal system protein TolB (430 aa).

The N-terminal stretch at 1–21 is a signal peptide; that stretch reads MKQALRVAFGFLILWASVLHA.

Belongs to the TolB family. As to quaternary structure, the Tol-Pal system is composed of five core proteins: the inner membrane proteins TolA, TolQ and TolR, the periplasmic protein TolB and the outer membrane protein Pal. They form a network linking the inner and outer membranes and the peptidoglycan layer.

It localises to the periplasm. Its function is as follows. Part of the Tol-Pal system, which plays a role in outer membrane invagination during cell division and is important for maintaining outer membrane integrity. TolB occupies a key intermediary position in the Tol-Pal system because it communicates directly with both membrane-embedded components, Pal in the outer membrane and TolA in the inner membrane. The polypeptide is Tol-Pal system protein TolB (Escherichia coli O8 (strain IAI1)).